The chain runs to 1275 residues: Serine/threonine-protein kinase ULK4 (1275 aa).

Positions 4-280 (FILYEEIGRG…WTRLLQHSFW (277 aa)) constitute a Protein kinase domain. The active-site Proton acceptor is Asp121. Disordered stretches follow at residues 299–346 (SRNT…EFRP) and 359–393 (FLLSSRPTPRTSTAVEVSPGEDRTHCSPQKTSPLT). A compositionally biased stretch (basic and acidic residues) spans 336-346 (FRLENPTEFRP). Polar residues-rich tracts occupy residues 363-373 (SRPTPRTSTAV) and 384-393 (CSPQKTSPLT). 6 HEAT repeats span residues 727–765 (LIQEKDFVSTIIRLLESPSTYIRAKAFLVLLYILIYNRE), 842–880 (LKMCLPLMPIVLHLVTSQVFRPQVVTEEFLFSYGTILSH), 926–964 (STVVDYILPPLVSLVQSQNVEWRLFSLRLLSETTSLLVN), 1025–1063 (LVEESKLIPLIFEVTLEHQESILGNTMQSVIALLNNLVA), 1151–1189 (NRPLTDLISLLIPLLPNEDPEIFDVSSKCLSILVQLYGG), and 1213–1253 (PKEQ…LAPG).

Belongs to the protein kinase superfamily. Ser/Thr protein kinase family. APG1/unc-51/ULK1 subfamily.

The enzyme catalyses L-seryl-[protein] + ATP = O-phospho-L-seryl-[protein] + ADP + H(+). The catalysed reaction is L-threonyl-[protein] + ATP = O-phospho-L-threonyl-[protein] + ADP + H(+). Its function is as follows. May be involved in the remodeling of cytoskeletal components, such as alpha-tubulin, and in this way regulates neurite branching and elongation, as well as cell motility. The polypeptide is Serine/threonine-protein kinase ULK4 (ULK4) (Pongo abelii (Sumatran orangutan)).